We begin with the raw amino-acid sequence, 947 residues long: Protein translocase subunit SecA (947 aa).

ATP contacts are provided by residues Q85, 103–107, and D514; that span reads GEGKT. A disordered region spans residues 864-947; that stretch reads AAPSLDKGAQ…QAKGGRRRKK (84 aa). A compositionally biased stretch (basic and acidic residues) spans 884–900; it reads PEIRAKGLDAPQRRDLH. Over residues 934-947 the composition is skewed to basic residues; the sequence is ERRKQAKGGRRRKK.

It belongs to the SecA family. Monomer and homodimer. Part of the essential Sec protein translocation apparatus which comprises SecA, SecYEG and auxiliary proteins SecDF. Other proteins may also be involved.

The protein localises to the cell membrane. Its subcellular location is the cytoplasm. It catalyses the reaction ATP + H2O + cellular proteinSide 1 = ADP + phosphate + cellular proteinSide 2.. Its function is as follows. Part of the Sec protein translocase complex. Interacts with the SecYEG preprotein conducting channel. Has a central role in coupling the hydrolysis of ATP to the transfer of proteins into and across the cell membrane, serving as an ATP-driven molecular motor driving the stepwise translocation of polypeptide chains across the membrane. This is Protein translocase subunit SecA from Streptomyces lividans.